Here is a 431-residue protein sequence, read N- to C-terminus: Urokinase-type plasminogen activator (431 aa).

Positions 1 to 20 (MRALLARLLLCVLVVSDSKG) are cleaved as a signal peptide. In terms of domain architecture, EGF-like spans 27 to 63 (VPSNCDCLNGGTCVSNKYFSNIHWCNCPKKFGGQHCE). Disulfide bonds link C31–C39, C33–C51, C53–C62, C70–C151, C91–C133, and C122–C146. The tract at residues 34–57 (LNGGTCVSNKYFSNIHWCNCPKKF) is binds urokinase plasminogen activator surface receptor. O-linked (Fuc) threonine glycosylation occurs at T38. Residues 70–151 (CYEGNGHFYR…LVQECMVHDC (82 aa)) form the Kringle domain. The tract at residues 152–177 (ADGKKPSSPPEELKFQCGQKTLRPRF) is connecting peptide. The residue at position 158 (S158) is a Phosphoserine. Intrachain disulfides connect C168-C299, C209-C225, C217-C288, C313-C382, C345-C361, and C372-C400. The Peptidase S1 domain occupies 179–424 (IIGGEFTTIE…FLPWIRSHTK (246 aa)). Active-site charge relay system residues include H224 and D275. A glycan (N-linked (GlcNAc...) asparagine) is linked at N322. A Phosphoserine modification is found at S323. Catalysis depends on S376, which acts as the Charge relay system.

This sequence belongs to the peptidase S1 family. As to quaternary structure, found in high and low molecular mass forms. Each consists of two chains, A and B. The high molecular mass form contains a long chain A which is cleaved to yield a short chain A. Forms heterodimer with SERPINA5. Binds LRP1B; binding is followed by internalization and degradation. Interacts with MRC2. Interacts with PLAUR. In complex with SERPINE1, interacts with PLAUR/uPAR. Interacts with SORL1 and LRP1, either alone or in complex with SERPINE1; these interactions are abolished in the presence of LRPAP1/RAP. The ternary complex composed of PLAUR-PLAU-PAI1 also interacts with SORLA. Post-translationally, phosphorylation of Ser-158 and Ser-323 abolishes proadhesive ability but does not interfere with receptor binding. In terms of processing, produced as an inactive single-chain protein (pro-uPA or sc-uPA), is processed into the active disulfide-linked two-chain form of PLAU/uPA by a proteolytic event mediated, at least, by TMPRSS4. In terms of tissue distribution, expressed in the prostate gland and prostate cancers.

It is found in the secreted. It carries out the reaction Specific cleavage of Arg-|-Val bond in plasminogen to form plasmin.. Inhibited by SERPINA5. Inhibited by SERPINE1. Specifically cleaves the zymogen plasminogen to form the active enzyme plasmin. This Homo sapiens (Human) protein is Urokinase-type plasminogen activator.